A 462-amino-acid polypeptide reads, in one-letter code: Argininosuccinate lyase (462 aa).

This sequence belongs to the lyase 1 family. Argininosuccinate lyase subfamily.

The protein localises to the cytoplasm. The catalysed reaction is 2-(N(omega)-L-arginino)succinate = fumarate + L-arginine. It participates in amino-acid biosynthesis; L-arginine biosynthesis; L-arginine from L-ornithine and carbamoyl phosphate: step 3/3. This chain is Argininosuccinate lyase, found in Pelagibacter ubique (strain HTCC1062).